We begin with the raw amino-acid sequence, 71 residues long: Small ribosomal subunit protein bS18 (71 aa).

It belongs to the bacterial ribosomal protein bS18 family. Part of the 30S ribosomal subunit. Forms a tight heterodimer with protein bS6.

In terms of biological role, binds as a heterodimer with protein bS6 to the central domain of the 16S rRNA, where it helps stabilize the platform of the 30S subunit. This chain is Small ribosomal subunit protein bS18, found in Synechococcus elongatus (strain ATCC 33912 / PCC 7942 / FACHB-805) (Anacystis nidulans R2).